The following is a 144-amino-acid chain: Transcription antitermination protein NusB (144 aa).

The protein belongs to the NusB family.

In terms of biological role, involved in transcription antitermination. Required for transcription of ribosomal RNA (rRNA) genes. Binds specifically to the boxA antiterminator sequence of the ribosomal RNA (rrn) operons. This is Transcription antitermination protein NusB from Buchnera aphidicola subsp. Baizongia pistaciae (strain Bp).